The chain runs to 98 residues: Large ribosomal subunit protein uL23 (98 aa).

This sequence belongs to the universal ribosomal protein uL23 family. In terms of assembly, part of the 50S ribosomal subunit. Contacts protein L29, and trigger factor when it is bound to the ribosome.

Functionally, one of the early assembly proteins it binds 23S rRNA. One of the proteins that surrounds the polypeptide exit tunnel on the outside of the ribosome. Forms the main docking site for trigger factor binding to the ribosome. This is Large ribosomal subunit protein uL23 from Maricaulis maris (strain MCS10) (Caulobacter maris).